The primary structure comprises 48 residues: DNA-directed RNA polymerase subunit Rpo12 (48 aa).

Residues Cys6, Cys9, Cys26, and Cys29 each coordinate Zn(2+).

The protein belongs to the archaeal Rpo12/eukaryotic RPC10 RNA polymerase subunit family. As to quaternary structure, part of the 13-subunit RNA polymerase. Requires Zn(2+) as cofactor.

The protein localises to the cytoplasm. The enzyme catalyses RNA(n) + a ribonucleoside 5'-triphosphate = RNA(n+1) + diphosphate. DNA-dependent RNA polymerase (RNAP) catalyzes the transcription of DNA into RNA using the four ribonucleoside triphosphates as substrates. The polypeptide is DNA-directed RNA polymerase subunit Rpo12 (Sulfolobus acidocaldarius (strain ATCC 33909 / DSM 639 / JCM 8929 / NBRC 15157 / NCIMB 11770)).